The following is a 369-amino-acid chain: UDP-N-acetylglucosamine--N-acetylmuramyl-(pentapeptide) pyrophosphoryl-undecaprenol N-acetylglucosamine transferase (369 aa).

Residues 10-12 (TAG), asparagine 124, arginine 161, serine 195, and glutamine 295 each bind UDP-N-acetyl-alpha-D-glucosamine.

The protein belongs to the glycosyltransferase 28 family. MurG subfamily.

It is found in the cell membrane. It catalyses the reaction di-trans,octa-cis-undecaprenyl diphospho-N-acetyl-alpha-D-muramoyl-L-alanyl-D-glutamyl-meso-2,6-diaminopimeloyl-D-alanyl-D-alanine + UDP-N-acetyl-alpha-D-glucosamine = di-trans,octa-cis-undecaprenyl diphospho-[N-acetyl-alpha-D-glucosaminyl-(1-&gt;4)]-N-acetyl-alpha-D-muramoyl-L-alanyl-D-glutamyl-meso-2,6-diaminopimeloyl-D-alanyl-D-alanine + UDP + H(+). Its pathway is cell wall biogenesis; peptidoglycan biosynthesis. Cell wall formation. Catalyzes the transfer of a GlcNAc subunit on undecaprenyl-pyrophosphoryl-MurNAc-pentapeptide (lipid intermediate I) to form undecaprenyl-pyrophosphoryl-MurNAc-(pentapeptide)GlcNAc (lipid intermediate II). The sequence is that of UDP-N-acetylglucosamine--N-acetylmuramyl-(pentapeptide) pyrophosphoryl-undecaprenol N-acetylglucosamine transferase from Acidothermus cellulolyticus (strain ATCC 43068 / DSM 8971 / 11B).